Reading from the N-terminus, the 1161-residue chain is Lysine-specific demethylase 2A (1161 aa).

Position 28 is a phosphoserine (S28). Positions 148 to 316 (FSHTRLENMV…MQLKIYSIED (169 aa)) constitute a JmjC domain. Position 209 (T209) interacts with substrate. 2 residues coordinate Fe cation: H212 and D214. K229 contributes to the substrate binding site. Fe cation is bound at residue H284. A phosphoserine mark is found at S390 and S394. Residues 419 to 433 (KTLSGDSSSDSTRGS) are compositionally biased toward low complexity. The disordered stretch occupies residues 419-445 (KTLSGDSSSDSTRGSHNGQVWDPQCSP). S444 carries the post-translational modification Phosphoserine. Residue K505 forms a Glycyl lysine isopeptide (Lys-Gly) (interchain with G-Cter in SUMO2) linkage. A disordered region spans residues 532–557 (VPTIPITKPHTMKPAPRLTPVRPAAA). T550 carries the post-translational modification Phosphothreonine. Phosphoserine is present on S558. The CXXC-type zinc finger occupies 564–610 (ARRRRVRCRKCKACVQGECGVCHYCRDMKKFGGPGRMKQSCVLRQCL). Residues C571, C574, C577, C582, C585, C588, C604, C609, C620, and C623 each contribute to the Zn(2+) site. A PHD-type zinc finger spans residues 617 to 678 (SVTCSLCGEV…CWECPKCYQE (62 aa)). T632 is subject to Phosphothreonine. 6 residues coordinate Zn(2+): C642, C645, H650, C653, C672, and C675. Phosphoserine is present on S692. The interval 705–789 (LRSCEEPLTP…PSGKKELSEV (85 aa)) is disordered. At T713 the chain carries Phosphothreonine. 2 positions are modified to phosphoserine: S718 and S731. Basic and acidic residues-rich tracts occupy residues 746–757 (SDHHSASRDERF) and 771–789 (TMVREKENNPSGKKELSEV). 3 positions are modified to phosphoserine: S825, S868, and S882. The tract at residues 840-886 (CPARNPQHGDEEGLGGEEEEEEEEEEDDSAEEGGAARLNGRGSWAQD) is disordered. Residues 851-870 (EGLGGEEEEEEEEEEDDSAE) are compositionally biased toward acidic residues. One can recognise an F-box domain in the interval 888-935 (DESWMQREVWMSVFRYLSRKELCECMRVCKTWYKWCCDKRLWTKIDLS). 2 LRR repeats span residues 960–981 (WTNISKKQLTWLVNRLPGLKDL) and 983–1009 (LAGCSWSAVSALSTSSCPLLRTLDLRW). At R1019 the chain carries ADP-ribosylarginine. LRR repeat units follow at residues 1047–1072 (GLDITDATLRLIIRHMPLLSRLDLSH), 1073–1102 (CSHLTDQSSNLLTAVGSSTRYSLTELNMAG), 1103–1127 (CNKLTDQTLFFLRRIANVTLIDLRG), and 1128–1155 (CKQITRKACEHFISDLSINSLYCLSDEK).

This sequence belongs to the JHDM1 histone demethylase family. Part of a SCF (SKP1-cullin-F-box) protein ligase complex. Interacts with CBX5/HP1A; the interaction promotes CBX5 localization to chromatin. The SKP1-KDM2A complex interacts with UBB. Fe(2+) is required as a cofactor. In terms of processing, mono-ADP-ribosylated at Arg-1019 in response to DNA damage, leading to displacement from chromatin, resulting in increased dimethylation of histone H3 at 'Lys-36'.

The protein resides in the nucleus. It localises to the nucleoplasm. Its subcellular location is the chromosome. The catalysed reaction is N(6),N(6)-dimethyl-L-lysyl(36)-[histone H3] + 2 2-oxoglutarate + 2 O2 = L-lysyl(36)-[histone H3] + 2 formaldehyde + 2 succinate + 2 CO2. In terms of biological role, histone demethylase that specifically demethylates 'Lys-36' of histone H3, thereby playing a central role in histone code. Preferentially demethylates dimethylated H3 'Lys-36' residue while it has weak or no activity for mono- and tri-methylated H3 'Lys-36'. May also recognize and bind to some phosphorylated proteins and promote their ubiquitination and degradation. Required to maintain the heterochromatic state. Associates with centromeres and represses transcription of small non-coding RNAs that are encoded by the clusters of satellite repeats at the centromere. Required to sustain centromeric integrity and genomic stability, particularly during mitosis. Regulates circadian gene expression by repressing the transcriptional activator activity of CLOCK-BMAL1 heterodimer and RORA in a catalytically-independent manner. The chain is Lysine-specific demethylase 2A (Kdm2a) from Mus musculus (Mouse).